We begin with the raw amino-acid sequence, 829 residues long: Sodium/hydrogen exchanger 3 (829 aa).

The N-terminal stretch at 1–26 (MWHRALGPGWKLLLALALTSLQGARG) is a signal peptide. Topologically, residues 27 to 46 (AEEEPSSDGSFQVVTFKWHH) are extracellular. The chain crosses the membrane as a helical span at residues 47-69 (VQDPYIIALWILVASLAKIVFHL). The Cytoplasmic portion of the chain corresponds to 70–77 (SHKVTSIV). Residues 78–97 (PESALLIVLGLVLGGIVWAA) form a helical membrane-spanning segment. At 98–106 (DHIASFTLT) the chain is on the extracellular side. Residues 107–124 (PTLFFFYLLPPIVLDAGY) form a helical membrane-spanning segment. Topologically, residues 125 to 127 (FMP) are cytoplasmic. A helical transmembrane segment spans residues 128–163 (NRLFFGNLGTILLYAVIGTIWNAATTGLSLYGVFLS). Positions 133, 136, and 137 each coordinate a 1,2-diacyl-sn-glycero-3-phospho-(1D-myo-inositol). Topologically, residues 164-176 (GLMGELKIGLLDF) are extracellular. Residues 177–198 (LLFGSLIAAVDPVAVLAVFEEV) traverse the membrane as a helical segment. The Cytoplasmic portion of the chain corresponds to 199 to 200 (HV). Residues 201–232 (NEVLFIIVFGESLLNDAVTVVLYNVFESFVTL) traverse the membrane as a helical segment. Residues 233–239 (GGDAVTG) lie on the Extracellular side of the membrane. Residues 240–274 (VDCVKGIVSFFVVSLGGTLVGVIFAFLLSLVTRFT) form a helical membrane-spanning segment. The Cytoplasmic portion of the chain corresponds to 275–276 (KH). Residues 277–299 (VRIIEPGFVFVISYLSYLTSEML) form a helical membrane-spanning segment. The Extracellular portion of the chain corresponds to 300 to 301 (SL). The chain crosses the membrane as a helical span at residues 302 to 318 (SSILAITFCGICCQKYV). The Cytoplasmic portion of the chain corresponds to 319-325 (KANISEQ). The helical transmembrane segment at 326 to 354 (SATTVRYTMKMLASGAETIIFMFLGISAV) threads the bilayer. The Extracellular segment spans residues 355–362 (NPDIWTWN). A helical transmembrane segment spans residues 363 to 384 (TAFVLLTLVFISVYRAIGVVLQ). At 385 to 397 (TWILNRYRMVQLE) the chain is on the cytoplasmic side. Met-393 contributes to the a 1,2-diacyl-sn-glycero-3-phospho-(1D-myo-inositol) binding site. Residues 398–421 (TIDQVVMSYGGLRGAVAYALVVLL) form a helical membrane-spanning segment. Residues 422-428 (DEKKVKE) are Extracellular-facing. The chain crosses the membrane as a helical span at residues 429 to 462 (KNLFVSTTLIVVFFTVIFQGLTIKPLVQWLKVKR). The Cytoplasmic segment spans residues 463 to 829 (SEHREPKLNE…QPAAPESTHM (367 aa)). A 1,2-diacyl-sn-glycero-3-phospho-(1D-myo-inositol) contacts are provided by Gln-492, Ile-493, and His-495. 2 positions are modified to phosphoserine: Ser-550 and Ser-558. Positions 571 to 585 (RPSTVEASVSYFLRE) are interaction with EZR. The interval 586–663 (NVSAVCLDMQ…RKRLESFKSA (78 aa)) is interaction with NHERF4. Positions 587–691 (VSAVCLDMQS…AQKRRNSSIP (105 aa)) are interaction with AHCYL1. A phosphoserine mark is found at Ser-588 and Ser-603. Residue Ser-659 is modified to Phosphoserine; by SGK1. Residues 677-687 (YKRERAQKRRN) show a composition bias toward basic residues. Positions 677-696 (YKRERAQKRRNSSIPNGKLP) are disordered. Phosphoserine is present on residues Ser-714, Ser-805, and Ser-808.

This sequence belongs to the monovalent cation:proton antiporter 1 (CPA1) transporter (TC 2.A.36) family. As to quaternary structure, homodimer. Found in the forms of complex and dynamic macromolecular complexes. Binds NHERF1 and NHERF2. Interacts with CHP1; this interaction increases trafficking and activity of SLC9A3 at the plasma membrane. Interacts with CHP2 and SHANK2. Interacts with PDZK1 (via C-terminal PDZ domain). Interacts with NHERF4 and interactions decrease in response to elevated calcium ion levels. Interacts with AHCYL1; the interaction is required for SLC9A3 activity. Interacts with EZR; interaction targets SLC9A3 to the apical membrane. Interacts with SNX27 (via PDZ domains); directs SLC9A3 membrane insertion from early endosomes to the plasma membrane. Post-translationally, phosphorylated by PKA, which inhibits activity. Phosphorylation at Ser-659 by SGK1 is associated with increased abundance at the cell membrane. Phosphorylation at Ser-714 by CSNK2A1 regulates SLC9A3 activity through the formation of multiple signaling complexes.

It localises to the apical cell membrane. The protein resides in the cell membrane. Its subcellular location is the recycling endosome membrane. It is found in the early endosome membrane. The catalysed reaction is Na(+)(in) + H(+)(out) = Na(+)(out) + H(+)(in). Its activity is regulated as follows. Seems to switch between active and inactive modes in response to various stimuli. Activated directly or indirectly by membrane phosphatidylinositol (PIs). Regulated by a variety of auxiliary proteins, which facilitate the maturation, cell surface expression and function of the transporter. Inhibited specifically by the drug tenapanor. Its function is as follows. Plasma membrane Na(+)/H(+) antiporter. Exchanges intracellular H(+) ions for extracellular Na(+) in 1:1 stoichiometry, playing a key role in salt and fluid absorption and pH homeostasis. Major apical Na(+)/H(+) exchanger in kidney and intestine playing an important role in renal and intestine Na(+) absorption and blood pressure regulation. In Mus musculus (Mouse), this protein is Sodium/hydrogen exchanger 3.